Reading from the N-terminus, the 489-residue chain is UDP-N-acetylmuramate--L-alanine ligase (489 aa).

An ATP-binding site is contributed by 128–134; it reads GTHGKTT.

The protein belongs to the MurCDEF family.

Its subcellular location is the cytoplasm. It carries out the reaction UDP-N-acetyl-alpha-D-muramate + L-alanine + ATP = UDP-N-acetyl-alpha-D-muramoyl-L-alanine + ADP + phosphate + H(+). The protein operates within cell wall biogenesis; peptidoglycan biosynthesis. Functionally, cell wall formation. The polypeptide is UDP-N-acetylmuramate--L-alanine ligase (Shewanella pealeana (strain ATCC 700345 / ANG-SQ1)).